A 238-amino-acid chain; its full sequence is ATP synthase subunit a (238 aa).

6 consecutive transmembrane segments (helical) span residues 18 to 38, 76 to 96, 114 to 134, 150 to 170, 188 to 208, and 211 to 231; these read TTNL…VFAL, FGLY…IGLF, PIVT…SGVA, FKVW…TLGL, GIAF…ALIW, and FSVF…SVYI.

This sequence belongs to the ATPase A chain family. As to quaternary structure, F-type ATPases have 2 components, CF(1) - the catalytic core - and CF(0) - the membrane proton channel. CF(1) has five subunits: alpha(3), beta(3), gamma(1), delta(1), epsilon(1). CF(0) has three main subunits: a(1), b(2) and c(9-12). The alpha and beta chains form an alternating ring which encloses part of the gamma chain. CF(1) is attached to CF(0) by a central stalk formed by the gamma and epsilon chains, while a peripheral stalk is formed by the delta and b chains.

The protein resides in the cell membrane. In terms of biological role, key component of the proton channel; it plays a direct role in the translocation of protons across the membrane. The chain is ATP synthase subunit a from Pediococcus pentosaceus (strain ATCC 25745 / CCUG 21536 / LMG 10740 / 183-1w).